The following is a 350-amino-acid chain: UDP-3-O-acylglucosamine N-acyltransferase (350 aa).

Residue His-240 is the Proton acceptor of the active site.

The protein belongs to the transferase hexapeptide repeat family. LpxD subfamily. As to quaternary structure, homotrimer.

It catalyses the reaction a UDP-3-O-[(3R)-3-hydroxyacyl]-alpha-D-glucosamine + a (3R)-hydroxyacyl-[ACP] = a UDP-2-N,3-O-bis[(3R)-3-hydroxyacyl]-alpha-D-glucosamine + holo-[ACP] + H(+). The protein operates within bacterial outer membrane biogenesis; LPS lipid A biosynthesis. In terms of biological role, catalyzes the N-acylation of UDP-3-O-acylglucosamine using 3-hydroxyacyl-ACP as the acyl donor. Is involved in the biosynthesis of lipid A, a phosphorylated glycolipid that anchors the lipopolysaccharide to the outer membrane of the cell. The chain is UDP-3-O-acylglucosamine N-acyltransferase from Methylobacillus flagellatus (strain ATCC 51484 / DSM 6875 / VKM B-1610 / KT).